The primary structure comprises 407 residues: Dephospho-CoA kinase (407 aa).

Positions 3-204 (RIGLTGGIGA…QPFAHNLAQR (202 aa)) constitute a DPCK domain. ATP is bound at residue 11 to 16 (GAGKSL). Positions 196 to 407 (PFAHNLAQRQ…EWADAVHWRP (212 aa)) are UPF0157.

This sequence in the N-terminal section; belongs to the CoaE family. In the C-terminal section; belongs to the UPF0157 (GrpB) family.

Its subcellular location is the cytoplasm. The enzyme catalyses 3'-dephospho-CoA + ATP = ADP + CoA + H(+). It functions in the pathway cofactor biosynthesis; coenzyme A biosynthesis; CoA from (R)-pantothenate: step 5/5. Functionally, catalyzes the phosphorylation of the 3'-hydroxyl group of dephosphocoenzyme A to form coenzyme A. The polypeptide is Dephospho-CoA kinase (Mycobacterium bovis (strain ATCC BAA-935 / AF2122/97)).